The sequence spans 869 residues: Rho GTPase-activating protein 27 (869 aa).

In terms of domain architecture, SH3 spans 6–69; it reads EGDVYVLVEH…PAQYVRELPA (64 aa). Ala28 is subject to Phosphotyrosine. The tract at residues 104 to 134 is disordered; sequence GADGSSAEPRGRASSLCGPARQRTGGQRNSL. 3 positions are modified to phosphoserine: Ser155, Ser215, and Ser249. 2 disordered regions span residues 208-300 and 331-401; these read RCPP…SGES and ETEE…GWSC. Residues 209–220 show a composition bias toward basic and acidic residues; it reads CPPRAESPKQVD. The segment covering 235–250 has biased composition (low complexity); sequence RATSPRSAAAPPRLSP. Positions 246–280 constitute a WW 1 domain; the sequence is PRLSPVWETHTDTGTGRPYYYNPDTGVTTWESPFE. The span at 283–294 shows a compositional bias: polar residues; that stretch reads EGTTSPATSRAS. Residues 299 to 333 form the WW 2 domain; sequence ESLETEWGQYWDEESRRVFFYNPLTGETAWEDETE. Polar residues predominate over residues 345 to 356; the sequence is MQPSLSPRSPGQ. Ser350 is subject to Phosphoserine. The 34-residue stretch at 414 to 447 folds into the WW 3 domain; sequence QFTQEQWVRLEDQHGKPYFYNPEDSSVQWELPQV. Disordered regions lie at residues 449–477 and 623–642; these read IPAP…KIKT and EEDV…GLES. 2 positions are modified to phosphoserine: Ser459 and Ser462. Thr464 is subject to Phosphothreonine. Ser469 is subject to Phosphoserine. One can recognise a PH domain in the interval 477–593; the sequence is TLDKAGVLHR…WHKAIAEGIS (117 aa). 2 positions are modified to phosphoserine: Ser632 and Ser636. Residues 677–866 enclose the Rho-GAP domain; sequence CALAQLCERE…LILHQCADIF (190 aa).

Interacts with SH3KBP1/CIN85. Widely expressed. Highly expressed in kidney, lung, small intestine and thymus.

It localises to the cytoplasm. It is found in the membrane. Its function is as follows. Rho GTPase-activating protein which may be involved in clathrin-mediated endocytosis. GTPase activators for the Rho-type GTPases act by converting them to an inactive GDP-bound state. Has activity toward CDC42 and RAC1. This is Rho GTPase-activating protein 27 (Arhgap27) from Mus musculus (Mouse).